A 276-amino-acid chain; its full sequence is Ribosomal RNA small subunit methyltransferase A (276 aa).

S-adenosyl-L-methionine contacts are provided by Asn24, Leu26, Gly51, Glu72, Asp97, and Asn118.

This sequence belongs to the class I-like SAM-binding methyltransferase superfamily. rRNA adenine N(6)-methyltransferase family. RsmA subfamily.

The protein resides in the cytoplasm. It carries out the reaction adenosine(1518)/adenosine(1519) in 16S rRNA + 4 S-adenosyl-L-methionine = N(6)-dimethyladenosine(1518)/N(6)-dimethyladenosine(1519) in 16S rRNA + 4 S-adenosyl-L-homocysteine + 4 H(+). Functionally, specifically dimethylates two adjacent adenosines (A1518 and A1519) in the loop of a conserved hairpin near the 3'-end of 16S rRNA in the 30S particle. May play a critical role in biogenesis of 30S subunits. The polypeptide is Ribosomal RNA small subunit methyltransferase A (Clostridium acetobutylicum (strain ATCC 824 / DSM 792 / JCM 1419 / IAM 19013 / LMG 5710 / NBRC 13948 / NRRL B-527 / VKM B-1787 / 2291 / W)).